We begin with the raw amino-acid sequence, 353 residues long: MTDTGKPLLRVLQGEAVWPPPIWLMRQAGRYLPEFRALRDQADFITRCMTPDLATEITLQPIRRYAMDGAILFSDILILPWAMGQSLDFVAGKGPILGAIRSEADLARLDPKRVPDATAPVMETLSRLRAILDGPDPIGAAQGGRVTLLGFAGAPFTVACYMVEGHGSREFDATRGMAYSDPLLFDRLMATLTQATADMLVAQIDAGAEAVMLFDSWSGLLPPAQFRRHVIAPTRAIVQEIQARRPGVPVIGFPRLAGIMAAEYARETGLRVMALDTGADMAAMAGLLPPGMTVQGNLDPLLLLAGGDAMAQEARAIRDAMKGRPHVFNLGHGVVPPTPPEHVGDLVRTVREV.

Substrate-binding positions include 26 to 30 (RQAGR), Asp75, Tyr161, Ser216, and His332.

Belongs to the uroporphyrinogen decarboxylase family. In terms of assembly, homodimer.

Its subcellular location is the cytoplasm. The catalysed reaction is uroporphyrinogen III + 4 H(+) = coproporphyrinogen III + 4 CO2. It participates in porphyrin-containing compound metabolism; protoporphyrin-IX biosynthesis; coproporphyrinogen-III from 5-aminolevulinate: step 4/4. In terms of biological role, catalyzes the decarboxylation of four acetate groups of uroporphyrinogen-III to yield coproporphyrinogen-III. The polypeptide is Uroporphyrinogen decarboxylase (Gluconacetobacter diazotrophicus (strain ATCC 49037 / DSM 5601 / CCUG 37298 / CIP 103539 / LMG 7603 / PAl5)).